Here is a 254-residue protein sequence, read N- to C-terminus: Winged helix repair factor 1 (254 aa).

A Bipartite nuclear localization signal motif is present at residues 4–21; that stretch reads KRRLLASEAFGVKRRRAP. Winged helix domain regions lie at residues 32 to 104, 120 to 179, and 180 to 254; these read RAGS…GIVF, PCAG…LAVP, and GAGR…LPDT.

Belongs to the STK19 family. In terms of assembly, monomer in solution. Homodimer; when bound to DNA. Component of a transcription-coupled nucleotide excision repair (TC-NER) complex composed of STK19, ERCC6, ERCC8, DDA1, DDB1, ELOF1 and UVSSA which assembles and interacts with the multiprotein RNA polymerase II complex when it stalls at DNA lesions.

Its subcellular location is the nucleus. Functionally, DNA-binding protein which is required for efficient transcription-coupled nucleotide excision repair (TC-NER). Acts as part of a TC-NER complex which assembles and interacts with RNA polymerase II (RNAPII) when it stalls at DNA lesions. TC-NER complex subunit UVSSA binds to the GTF2H1/p62 subunit of the TFIIH transcription factor complex, tethering TFIIH to the TC-NER complex. WHR1/STK19 then interacts with the XPD helicase subunit of TFIIH which guides TFIIH to DNA downstream of the stalled RNAPII, ensuring DNA repair. Directly interacts with RNAPII and also binds to downstream DNA. Promotes the timely removal of DNA damage-stalled RNAPII, allowing downstream NER factors to access DNA lesions. Required for monoubiquitination of UVSSA. Regulates repositioning and stabilization of UVSSA within the TC-NER complex. Stimulates ubiquitination of RNAPII complex member RBP1. Also binds to RNA and regulates the expression levels of many mRNAs. The protein is Winged helix repair factor 1 of Mus musculus (Mouse).